Consider the following 160-residue polypeptide: Cytochrome b6-f complex subunit 4 (160 aa).

The next 3 membrane-spanning stretches (helical) occupy residues 36-56 (ILFTFPICIAGTIGLITGLAI), 95-115 (LLGIACQGAIPLGLMMVPFIE), and 131-151 (AVFLFGTAVTLWLGAGACFPI).

This sequence belongs to the cytochrome b family. PetD subfamily. The 4 large subunits of the cytochrome b6-f complex are cytochrome b6, subunit IV (17 kDa polypeptide, PetD), cytochrome f and the Rieske protein, while the 4 small subunits are PetG, PetL, PetM and PetN. The complex functions as a dimer.

The protein resides in the cellular thylakoid membrane. Component of the cytochrome b6-f complex, which mediates electron transfer between photosystem II (PSII) and photosystem I (PSI), cyclic electron flow around PSI, and state transitions. This chain is Cytochrome b6-f complex subunit 4, found in Picosynechococcus sp. (strain ATCC 27264 / PCC 7002 / PR-6) (Agmenellum quadruplicatum).